Reading from the N-terminus, the 255-residue chain is 3-deoxy-manno-octulosonate cytidylyltransferase (255 aa).

It belongs to the KdsB family.

It localises to the cytoplasm. It carries out the reaction 3-deoxy-alpha-D-manno-oct-2-ulosonate + CTP = CMP-3-deoxy-beta-D-manno-octulosonate + diphosphate. It participates in nucleotide-sugar biosynthesis; CMP-3-deoxy-D-manno-octulosonate biosynthesis; CMP-3-deoxy-D-manno-octulosonate from 3-deoxy-D-manno-octulosonate and CTP: step 1/1. Its pathway is bacterial outer membrane biogenesis; lipopolysaccharide biosynthesis. Functionally, activates KDO (a required 8-carbon sugar) for incorporation into bacterial lipopolysaccharide in Gram-negative bacteria. This Saccharophagus degradans (strain 2-40 / ATCC 43961 / DSM 17024) protein is 3-deoxy-manno-octulosonate cytidylyltransferase.